The following is a 320-amino-acid chain: tRNA dimethylallyltransferase (320 aa).

An ATP-binding site is contributed by 10–17; sequence GPTASGKT. Residue 12–17 coordinates substrate; the sequence is TASGKT. 3 interaction with substrate tRNA regions span residues 35 to 38, 159 to 163, and 241 to 246; these read DSAL, QRIQR, and RCVGYR.

It belongs to the IPP transferase family. In terms of assembly, monomer. Requires Mg(2+) as cofactor.

The catalysed reaction is adenosine(37) in tRNA + dimethylallyl diphosphate = N(6)-dimethylallyladenosine(37) in tRNA + diphosphate. In terms of biological role, catalyzes the transfer of a dimethylallyl group onto the adenine at position 37 in tRNAs that read codons beginning with uridine, leading to the formation of N6-(dimethylallyl)adenosine (i(6)A). This chain is tRNA dimethylallyltransferase, found in Aromatoleum aromaticum (strain DSM 19018 / LMG 30748 / EbN1) (Azoarcus sp. (strain EbN1)).